The primary structure comprises 72 residues: Translation initiation factor IF-1 (72 aa).

Residues 1-72 enclose the S1-like domain; the sequence is MSKDDVIEMQ…TRGRITWRAK (72 aa).

It belongs to the IF-1 family. In terms of assembly, component of the 30S ribosomal translation pre-initiation complex which assembles on the 30S ribosome in the order IF-2 and IF-3, IF-1 and N-formylmethionyl-tRNA(fMet); mRNA recruitment can occur at any time during PIC assembly.

It localises to the cytoplasm. Its function is as follows. One of the essential components for the initiation of protein synthesis. Stabilizes the binding of IF-2 and IF-3 on the 30S subunit to which N-formylmethionyl-tRNA(fMet) subsequently binds. Helps modulate mRNA selection, yielding the 30S pre-initiation complex (PIC). Upon addition of the 50S ribosomal subunit IF-1, IF-2 and IF-3 are released leaving the mature 70S translation initiation complex. The sequence is that of Translation initiation factor IF-1 from Clostridium kluyveri (strain ATCC 8527 / DSM 555 / NBRC 12016 / NCIMB 10680 / K1).